The sequence spans 843 residues: Protein P (843 aa).

Positions 1-177 (MPLSYQHFRK…FCGSPYSWEQ (177 aa)) are terminal protein domain (TP). The spacer stretch occupies residues 178–346 (DLQHGRLVIQ…YCLCHIVNLI (169 aa)). Disordered regions lie at residues 219–258 (RKSR…VGVE) and 297–316 (SSGH…RSQS). The tract at residues 347 to 690 (DDWGPCAEHG…YLNLYPVARQ (344 aa)) is polymerase/reverse transcriptase domain (RT). Positions 357 to 600 (EHRIRTPRTP…YSLNFMGYVI (244 aa)) constitute a Reverse transcriptase domain. Positions 429, 551, and 552 each coordinate Mg(2+).

Belongs to the hepadnaviridae P protein family.

The enzyme catalyses DNA(n) + a 2'-deoxyribonucleoside 5'-triphosphate = DNA(n+1) + diphosphate. The catalysed reaction is Endonucleolytic cleavage to 5'-phosphomonoester.. With respect to regulation, activated by host HSP70 and HSP40 in vitro to be able to bind the epsilon loop of the pgRNA. Because deletion of the RNase H region renders the protein partly chaperone-independent, the chaperones may be needed indirectly to relieve occlusion of the RNA-binding site by this domain. Inhibited by several reverse-transcriptase inhibitors: Lamivudine, Adefovir and Entecavir. Its function is as follows. Multifunctional enzyme that converts the viral RNA genome into dsDNA in viral cytoplasmic capsids. This enzyme displays a DNA polymerase activity that can copy either DNA or RNA templates, and a ribonuclease H (RNase H) activity that cleaves the RNA strand of RNA-DNA heteroduplexes in a partially processive 3'- to 5'-endonucleasic mode. Neo-synthesized pregenomic RNA (pgRNA) are encapsidated together with the P protein, and reverse-transcribed inside the nucleocapsid. Initiation of reverse-transcription occurs first by binding the epsilon loop on the pgRNA genome, and is initiated by protein priming, thereby the 5'-end of (-)DNA is covalently linked to P protein. Partial (+)DNA is synthesized from the (-)DNA template and generates the relaxed circular DNA (RC-DNA) genome. After budding and infection, the RC-DNA migrates in the nucleus, and is converted into a plasmid-like covalently closed circular DNA (cccDNA). The activity of P protein does not seem to be necessary for cccDNA generation, and is presumably released from (+)DNA by host nuclear DNA repair machinery. In Hepatitis B virus genotype B1 (isolate Japan/Ry30/2002) (HBV-B), this protein is Protein P.